The chain runs to 414 residues: Putative nickel insertion protein (414 aa).

The segment at 70–91 (ATHHDHDHSQDQTHHHHADHAP) is disordered.

Belongs to the LarC family.

The protein is Putative nickel insertion protein of Picosynechococcus sp. (strain ATCC 27264 / PCC 7002 / PR-6) (Agmenellum quadruplicatum).